A 332-amino-acid chain; its full sequence is 6-phosphogluconolactonase (332 aa).

This sequence belongs to the cycloisomerase 2 family.

The enzyme catalyses 6-phospho-D-glucono-1,5-lactone + H2O = 6-phospho-D-gluconate + H(+). Its pathway is carbohydrate degradation; pentose phosphate pathway; D-ribulose 5-phosphate from D-glucose 6-phosphate (oxidative stage): step 2/3. Catalyzes the hydrolysis of 6-phosphogluconolactone to 6-phosphogluconate. The chain is 6-phosphogluconolactonase from Pectobacterium carotovorum subsp. carotovorum (strain PC1).